The chain runs to 231 residues: 7-cyano-7-deazaguanine synthase (231 aa).

ATP is bound at residue 8 to 18 (FSGGQDSTTCL). Cys-188, Cys-197, Cys-200, and Cys-203 together coordinate Zn(2+).

It belongs to the QueC family. The cofactor is Zn(2+).

The catalysed reaction is 7-carboxy-7-deazaguanine + NH4(+) + ATP = 7-cyano-7-deazaguanine + ADP + phosphate + H2O + H(+). Its pathway is purine metabolism; 7-cyano-7-deazaguanine biosynthesis. Functionally, catalyzes the ATP-dependent conversion of 7-carboxy-7-deazaguanine (CDG) to 7-cyano-7-deazaguanine (preQ(0)). The polypeptide is 7-cyano-7-deazaguanine synthase (Salmonella paratyphi A (strain ATCC 9150 / SARB42)).